We begin with the raw amino-acid sequence, 473 residues long: MKNMIYNLISISLYSLIIILTDIYAKTSSLICNKNDIYLNDKFYFLKKKKYILYDVNIGEGFNLQKEVLYRMSLVIYQLNKRDKEYIYYLVLPPWCYLSHWSNKRHDNLQWNIFLNMNIIKNVIPIIEFSDYKKLYGDVTDFIISFKYLLDSNAQKAKYYHVLPFDKCYIEDYKFKIVCKNCDYKYSVTYSGNCTNIKGKNTLCYSDYIVTNYLVNYVVHKLFYIHNINSILIKNSNVVLVPFPNELFENNIEDILLFNEKLIYNGNNYIKEILKNSNYISCHLRYNDFKKITSYDVPSVQIAILKLLYIMFMNNKEKIFISTDEKKYVQYIINKHFKQFKHFFYFYENKDNYHEGQVAIIEQWICANSSTFVGNIFSRFTMHIIWERYLITKGKEHQNIDLCGYSINNNEQLKNRYKKIQYIYDHSSIEKLNNIYNTYSEIDKKYIITLCFGFPSHFPSNLSIYRKKYIPFA.

The first 25 residues, Met1–Ala25, serve as a signal peptide directing secretion. Residues Gly59–Asn63, His283–Arg285, and Arg379–Phe380 contribute to the GDP-beta-L-fucose site. The Proton acceptor role is filled by Glu60.

The protein belongs to the glycosyltransferase 68 family.

The protein resides in the endoplasmic reticulum. The catalysed reaction is L-seryl-[protein] + GDP-beta-L-fucose = 3-O-(alpha-L-fucosyl)-L-seryl-[protein] + GDP + H(+). It carries out the reaction L-threonyl-[protein] + GDP-beta-L-fucose = 3-O-(alpha-L-fucosyl)-L-threonyl-[protein] + GDP + H(+). The protein operates within protein modification; protein glycosylation. Functionally, catalyzes the reaction that attaches fucose through an O-glycosidic linkage to a conserved serine or threonine residue in the consensus sequence C1-X-X-S/T-C2 of thrombospondin type I repeats (TSRs) where C1 and C2 are the first and second cysteines of the repeat, respectively. O-fucosylates sporozoite proteins CSP and TRAP. O-fucosylation regulates stability and intracellular trafficking of TRAP but not of CSP. Dispensable for parasite transmission to the mosquito vector and/or infection of the vertebrate host hepatocytes. This Plasmodium berghei (strain Anka) protein is GDP-fucose protein O-fucosyltransferase 2.